Here is a 577-residue protein sequence, read N- to C-terminus: 2-succinyl-5-enolpyruvyl-6-hydroxy-3-cyclohexene-1-carboxylate synthase (577 aa).

It belongs to the TPP enzyme family. MenD subfamily. In terms of assembly, homodimer. Mg(2+) serves as cofactor. The cofactor is Mn(2+). Requires thiamine diphosphate as cofactor.

The catalysed reaction is isochorismate + 2-oxoglutarate + H(+) = 5-enolpyruvoyl-6-hydroxy-2-succinyl-cyclohex-3-ene-1-carboxylate + CO2. It functions in the pathway quinol/quinone metabolism; 1,4-dihydroxy-2-naphthoate biosynthesis; 1,4-dihydroxy-2-naphthoate from chorismate: step 2/7. It participates in quinol/quinone metabolism; menaquinone biosynthesis. Catalyzes the thiamine diphosphate-dependent decarboxylation of 2-oxoglutarate and the subsequent addition of the resulting succinic semialdehyde-thiamine pyrophosphate anion to isochorismate to yield 2-succinyl-5-enolpyruvyl-6-hydroxy-3-cyclohexene-1-carboxylate (SEPHCHC). This is 2-succinyl-5-enolpyruvyl-6-hydroxy-3-cyclohexene-1-carboxylate synthase from Geobacillus kaustophilus (strain HTA426).